Consider the following 162-residue polypeptide: Ribonuclease H (162 aa).

An RNase H type-1 domain is found at 1-141 (MKRIEIFTDG…ADALARAGMA (141 aa)). The Mg(2+) site is built by Asp-9, Glu-47, Asp-69, and Asp-133. Residues 139–162 (GMAPFKKKKGGDTASSEEGSARRR) are disordered.

It belongs to the RNase H family. Monomer. Mg(2+) serves as cofactor.

It localises to the cytoplasm. The enzyme catalyses Endonucleolytic cleavage to 5'-phosphomonoester.. Its function is as follows. Endonuclease that specifically degrades the RNA of RNA-DNA hybrids. The chain is Ribonuclease H from Chelativorans sp. (strain BNC1).